A 47-amino-acid chain; its full sequence is Large ribosomal subunit protein bL34 (47 aa).

The interval 1-28 is disordered; it reads MAKGKRTFQPNNRRRARVHGFRTRMRTR.

The protein belongs to the bacterial ribosomal protein bL34 family.

In Corynebacterium efficiens (strain DSM 44549 / YS-314 / AJ 12310 / JCM 11189 / NBRC 100395), this protein is Large ribosomal subunit protein bL34.